The sequence spans 157 residues: Glutaredoxin-2, mitochondrial (157 aa).

A mitochondrion-targeting transit peptide spans 1 to 18; the sequence is MYWRRAALVGTRLIPVRS. Phosphoserine is present on Ser20. Residues 51 to 151 form the Glutaredoxin domain; that stretch reads VNQIQETISN…PLVHQCHLKN (101 aa). Residue Cys62 participates in [2Fe-2S] cluster binding. Lys68 contacts glutathione. Residue Cys71 is modified to S-glutathionyl cysteine; alternate. Cys71 and Cys74 are disulfide-bonded. The glutathione site is built by Gln103 and Val115. Cys147 is a [2Fe-2S] cluster binding site.

This sequence belongs to the glutaredoxin family. As to quaternary structure, monomer; active form. Homodimer; inactive form. The homodimer is probably linked by 1 2Fe-2S cluster.

The protein resides in the mitochondrion. Its activity is regulated as follows. The 2Fe-2S present in the homodimer leads to inactivation of the enzyme. The 2Fe-2S may serve as a redox sensor: the presence of one-electron oxidants or reductants leading to the loss of the 2Fe-2S cluster, subsequent monomerization and activation of the enzyme. Its function is as follows. Glutathione-dependent oxidoreductase that facilitates the maintenance of mitochondrial redox homeostasis upon induction of apoptosis by oxidative stress. Involved in response to hydrogen peroxide and regulation of apoptosis caused by oxidative stress. Acts as a very efficient catalyst of monothiol reactions because of its high affinity for protein glutathione-mixed disulfides. Can receive electrons not only from glutathione (GSH), but also from thioredoxin reductase supporting both monothiol and dithiol reactions. Efficiently catalyzes both glutathionylation and deglutathionylation of mitochondrial complex I, which in turn regulates the superoxide production by the complex. Overexpression decreases the susceptibility to apoptosis and prevents loss of cardiolipin and cytochrome c release. The chain is Glutaredoxin-2, mitochondrial (GLRX2) from Bos taurus (Bovine).